The primary structure comprises 513 residues: Prostaglandin E2 receptor EP4 subtype (513 aa).

The Extracellular portion of the chain corresponds to Met-1–Ser-44. Asn-32 carries N-linked (GlcNAc...) asparagine glycosylation. The chain crosses the membrane as a helical span at residues Pro-45–Cys-68. The Cytoplasmic portion of the chain corresponds to Lys-69–Tyr-80. Residues Thr-81–Thr-104 form a helical membrane-spanning segment. Over Tyr-105 to Thr-121 the chain is Extracellular. An intrachain disulfide couples Cys-117 to Cys-195. The helical transmembrane segment at Phe-122–Ile-140 threads the bilayer. The Cytoplasmic portion of the chain corresponds to Glu-141–Leu-160. A helical transmembrane segment spans residues Ala-161–Arg-185. At Ser-186–Phe-209 the chain is on the extracellular side. Residues Ser-210–Leu-236 traverse the membrane as a helical segment. Residues Arg-237 to Glu-295 are Cytoplasmic-facing. A helical membrane pass occupies residues Ile-296–Asn-323. Residues Gln-324–Leu-340 lie on the Extracellular side of the membrane. The helical transmembrane segment at Gln-341–Leu-360 threads the bilayer. Residues Arg-361–Ile-513 lie on the Cytoplasmic side of the membrane. Residues Gly-383–Gly-403 form a disordered region. The segment covering Arg-384 to Gly-403 has biased composition (polar residues). Phosphoserine is present on residues Ser-402, Ser-405, and Ser-407.

This sequence belongs to the G-protein coupled receptor 1 family. Interacts with FEM1A. Post-translationally, phosphorylation mediates agonist-mediated desensitization by promoting cytoplasmic retention. Abundant expression in ileum, thymus and mastocytoma P-815 cells. Also observed in lung, spleen, heart and uterus.

Its subcellular location is the cell membrane. Receptor for prostaglandin E2 (PGE2). The activity of this receptor is mediated by G(s) proteins that stimulate adenylate cyclase. Has a relaxing effect on smooth muscle. May play an important role in regulating renal hemodynamics, intestinal epithelial transport, adrenal aldosterone secretion, and uterine function. The chain is Prostaglandin E2 receptor EP4 subtype (Ptger4) from Mus musculus (Mouse).